We begin with the raw amino-acid sequence, 376 residues long: Cytochrome b (376 aa).

The next 4 helical transmembrane spans lie at 28-48, 72-94, 107-127, and 169-189; these read YGFL…FLAS, WCFR…LHIL, SWIS…VGYV, and FFVL…IHIF. Residues His78 and His92 each contribute to the heme b site. His173 and His187 together coordinate heme b. Residue His192 participates in a ubiquinone binding. A run of 4 helical transmembrane segments spans residues 214–234, 274–294, 317–337, and 340–360; these read LLSL…IQSL, VPSK…LFLL, VPII…CQLP, and IFIL…LFVL.

It belongs to the cytochrome b family. As to quaternary structure, the main subunits of complex b-c1 are: cytochrome b, cytochrome c1 and the Rieske protein. Heme b serves as cofactor.

The protein localises to the mitochondrion inner membrane. Functionally, component of the ubiquinol-cytochrome c reductase complex (complex III or cytochrome b-c1 complex) that is part of the mitochondrial respiratory chain. The b-c1 complex mediates electron transfer from ubiquinol to cytochrome c. Contributes to the generation of a proton gradient across the mitochondrial membrane that is then used for ATP synthesis. This chain is Cytochrome b (MT-CYB), found in Plasmodium falciparum.